The primary structure comprises 148 residues: uncharacterized protein (148 aa).

The N-terminal stretch at M1–G16 is a signal peptide. N50 carries an N-linked (GlcNAc...) asparagine glycan. Positions M91 to M125 are disordered. A compositionally biased stretch (low complexity) spans P96–P116.

The protein localises to the secreted. This is an uncharacterized protein from Mus musculus (Mouse).